The primary structure comprises 234 residues: Endonuclease V (234 aa).

Residues aspartate 36 and aspartate 104 each coordinate Mg(2+).

The protein belongs to the endonuclease V family. Requires Mg(2+) as cofactor.

It is found in the cytoplasm. The catalysed reaction is Endonucleolytic cleavage at apurinic or apyrimidinic sites to products with a 5'-phosphate.. In terms of biological role, DNA repair enzyme involved in the repair of deaminated bases. Selectively cleaves double-stranded DNA at the second phosphodiester bond 3' to a deoxyinosine leaving behind the intact lesion on the nicked DNA. This Yersinia pestis protein is Endonuclease V.